The following is a 61-amino-acid chain: MFAGLPSLSHEQQQKAVERIHELMAQGISSGQAIALVAEELRATHTGEQIVARFEDEDEDE.

This sequence belongs to the UPF0181 family.

In Klebsiella pneumoniae subsp. pneumoniae (strain ATCC 700721 / MGH 78578), this protein is UPF0181 protein KPN78578_22920.